The primary structure comprises 565 residues: NAD-dependent malic enzyme (565 aa).

Tyrosine 104 serves as the catalytic Proton donor. Position 157 (arginine 157) interacts with NAD(+). Residue lysine 175 is the Proton acceptor of the active site. Residues glutamate 246, aspartate 247, and aspartate 270 each contribute to the a divalent metal cation site. Positions 270 and 418 each coordinate NAD(+).

It belongs to the malic enzymes family. In terms of assembly, homotetramer. The cofactor is Mg(2+). Mn(2+) serves as cofactor.

The catalysed reaction is (S)-malate + NAD(+) = pyruvate + CO2 + NADH. It carries out the reaction oxaloacetate + H(+) = pyruvate + CO2. The protein is NAD-dependent malic enzyme of Enterobacter sp. (strain 638).